Consider the following 24-residue polypeptide: Lantibiotic 107891 (24 aa).

At T2 the chain carries (E)-2,3-didehydrobutyrine. The segment at residues S3–C7 is a cross-link (lanthionine (Ser-Cys)). Position 4 is a 6'-chlorotryptophan (W4). 2,3-didehydroalanine (Ser) is present on S5. The segment at residues T8 to C11 is a cross-link (beta-methyllanthionine (Thr-Cys)). 2 consecutive cross-links (lanthionine (Ser-Cys)) follow at residues S13 to C20 and S18 to C23. The residue at position 14 (P14) is a 3,4-dihydroxyproline; in form A1. A 4-hydroxyproline; in form A2 modification is found at P14. Positions S21 to C24 form a cross-link, S-(2-aminovinyl)-D-cysteine (Ser-Cys).

The protein belongs to the type A lantibiotic family. In terms of processing, maturation of lantibiotics involves the enzymatic conversion of Thr, and Ser into dehydrated AA and the formation of thioether bonds with cysteine. The C-terminal lanthionine undergoes decarboxylation. This is followed by membrane translocation and cleavage of the modified precursor. Post-translationally, occurs in 2 forms, A1 contains 3,4-dihydroxyproline at Pro-14, A2 contains 4-hydroxyproline at Pro-14. The patent report does not provide the stereochemistry of the modified prolines. The patent report does not describe whether the 2,3-didehydrobutyrine is the E- or Z-isomer. In several diagrams it is shown as the E-isomer.

Its function is as follows. Lanthionine-containing peptide antibiotic (lantibiotic) active on Gram-positive bacteria. The bactericidal activity of lantibiotics is based on depolarization of energized bacterial cytoplasmic membranes, initiated by the formation of aqueous transmembrane pores. This chain is Lantibiotic 107891, found in Microbispora sp. (strain 107891).